We begin with the raw amino-acid sequence, 256 residues long: Tryptophan synthase alpha chain (256 aa).

Active-site proton acceptor residues include glutamate 51 and aspartate 62.

This sequence belongs to the TrpA family. As to quaternary structure, tetramer of two alpha and two beta chains.

It carries out the reaction (1S,2R)-1-C-(indol-3-yl)glycerol 3-phosphate + L-serine = D-glyceraldehyde 3-phosphate + L-tryptophan + H2O. Its pathway is amino-acid biosynthesis; L-tryptophan biosynthesis; L-tryptophan from chorismate: step 5/5. The alpha subunit is responsible for the aldol cleavage of indoleglycerol phosphate to indole and glyceraldehyde 3-phosphate. In Solidesulfovibrio magneticus (strain ATCC 700980 / DSM 13731 / RS-1) (Desulfovibrio magneticus), this protein is Tryptophan synthase alpha chain.